Reading from the N-terminus, the 362-residue chain is tRNA/tmRNA (uracil-C(5))-methyltransferase (362 aa).

S-adenosyl-L-methionine-binding residues include Gln-186, Tyr-214, Asn-219, Glu-235, and Asp-295. Cys-320 serves as the catalytic Nucleophile. Glu-354 serves as the catalytic Proton acceptor.

The protein belongs to the class I-like SAM-binding methyltransferase superfamily. RNA M5U methyltransferase family. TrmA subfamily.

The catalysed reaction is uridine(54) in tRNA + S-adenosyl-L-methionine = 5-methyluridine(54) in tRNA + S-adenosyl-L-homocysteine + H(+). It catalyses the reaction uridine(341) in tmRNA + S-adenosyl-L-methionine = 5-methyluridine(341) in tmRNA + S-adenosyl-L-homocysteine + H(+). Dual-specificity methyltransferase that catalyzes the formation of 5-methyluridine at position 54 (m5U54) in all tRNAs, and that of position 341 (m5U341) in tmRNA (transfer-mRNA). The protein is tRNA/tmRNA (uracil-C(5))-methyltransferase of Dechloromonas aromatica (strain RCB).